Reading from the N-terminus, the 28-residue chain is Kappa-stichotoxin-Shd1a/kappa-stichotoxin-Shd1b (28 aa).

Residue Pro-6 is modified to 4-hydroxyproline; in form SHTX-1 (Shd1a). Intrachain disulfides connect Cys-7/Cys-19 and Cys-10/Cys-25.

Belongs to the sea anemone BBH family. Occurs in 2 forms which differ in the post-translational modification of Pro-6. In form SHTX-1 (Shd1a) Pro-6 is a hydroxyproline while in form SHTX-2 (Shd1b) Pro-6 is unmodified.

The protein resides in the secreted. It localises to the nematocyst. In terms of biological role, kappa-stichotoxin-Shd1a: inhibits voltage-gated potassium channels (Kv). Its function is as follows. Kappa-stichotoxin-Shd1b: inhibits voltage-gated potassium channels (Kv). This toxin inhibits the binding of 125I-alpha-dendrotoxin to synaptosomal membranes (IC(50)=270 nM). This is Kappa-stichotoxin-Shd1a/kappa-stichotoxin-Shd1b from Stichodactyla haddoni (Saddle carpet anemone).